The following is a 545-amino-acid chain: Capsular polysaccharide phosphotransferase SacB (545 aa).

Belongs to the stealth family.

In terms of biological role, part of a capsular biosynthesis operon and has been suggested to be the polymerase that links individual UDP-N-acetyl-D-mannosamine monomers. In serotype A the capsule is composed of repeated units of (alpha 1-6)-linked N-acetyl-D-mannosamine-1-phosphate. Non-polar disruption of this open reading frame prevented capsule synthesis. The sequence is that of Capsular polysaccharide phosphotransferase SacB (sacB) from Neisseria meningitidis serogroup A.